Consider the following 185-residue polypeptide: Ribosome-recycling factor (185 aa).

Belongs to the RRF family.

The protein localises to the cytoplasm. Its function is as follows. Responsible for the release of ribosomes from messenger RNA at the termination of protein biosynthesis. May increase the efficiency of translation by recycling ribosomes from one round of translation to another. The sequence is that of Ribosome-recycling factor from Vibrio campbellii (strain ATCC BAA-1116).